We begin with the raw amino-acid sequence, 527 residues long: Coproporphyrinogen III oxidase (527 aa).

Residues 1–14 are compositionally biased toward low complexity; the sequence is MSTTDRVTTPTPTV. Positions 1 to 23 are disordered; it reads MSTTDRVTTPTPTVSGTDAPGPD. FAD is bound by residues 33-38, 56-57, Lys64, and 78-81; these read GGGITG, ES, and GPDS. The tract at residues 231 to 267 is disordered; it reads RRAARQRAAQNNAQQNSSHQNSTGQNNSAGTRGPAAS. Over residues 236–252 the composition is skewed to low complexity; the sequence is QRAAQNNAQQNSSHQNS. Residues Val300, Trp448, and 487-489 each bind FAD; that span reads VGL.

This sequence belongs to the protoporphyrinogen/coproporphyrinogen oxidase family. Coproporphyrinogen III oxidase subfamily. Requires FAD as cofactor.

The protein localises to the cytoplasm. The catalysed reaction is coproporphyrinogen III + 3 O2 = coproporphyrin III + 3 H2O2. It participates in porphyrin-containing compound metabolism; protoheme biosynthesis. Its function is as follows. Involved in coproporphyrin-dependent heme b biosynthesis. Catalyzes the oxidation of coproporphyrinogen III to coproporphyrin III. The protein is Coproporphyrinogen III oxidase of Propionibacterium freudenreichii subsp. freudenreichii.